The primary structure comprises 427 residues: Glutamate-1-semialdehyde 2,1-aminomutase (427 aa).

K265 is modified (N6-(pyridoxal phosphate)lysine).

It belongs to the class-III pyridoxal-phosphate-dependent aminotransferase family. HemL subfamily. In terms of assembly, homodimer. The cofactor is pyridoxal 5'-phosphate.

It is found in the cytoplasm. It catalyses the reaction (S)-4-amino-5-oxopentanoate = 5-aminolevulinate. The protein operates within porphyrin-containing compound metabolism; protoporphyrin-IX biosynthesis; 5-aminolevulinate from L-glutamyl-tRNA(Glu): step 2/2. The polypeptide is Glutamate-1-semialdehyde 2,1-aminomutase (Bordetella pertussis (strain Tohama I / ATCC BAA-589 / NCTC 13251)).